Consider the following 37-residue polypeptide: Alpha-conotoxin LvIA (37 aa).

A propeptide spanning residues 1–20 is cleaved from the precursor; that stretch reads FRGRDAAAKASGLVGLTDRR. Intrachain disulfides connect C22-C28 and C23-C36. Residues 24 to 26 form a ser-Xaa-Pro motif, crucial for potent interaction with nAChR region; that stretch reads SHP. C36 is subject to Cysteine amide.

It belongs to the conotoxin A superfamily. Expressed by the venom duct.

It is found in the secreted. Alpha-conotoxins act on postsynaptic membranes, they bind to the nicotinic acetylcholine receptors (nAChR) and thus inhibit them. This toxin blocks alpha-3-beta-2/CHRNA3-CHRNB2 nAChR with high selectivity (IC(50)=8.67 nM (on rat) and 17.5 (on human)). Also has weaker activity on alpha-6/alpha-3-beta-2-beta-3 (CHRNA6/CHRNA3-CHRNB2-CHRNB3) (IC(50)=108 nM (on rat)), alpha-6/alpha-3-beta-4 (CHRNA6/CHRNA3-CHRNB4) (IC(50)=121 nM (on rat)), alpha-3-beta-4 (CHRNA3-CHRNB4) (IC(50)=148 nM (on rat)), and alpha-7/CHRNA7 nAChRs (IC(50)=3000 nM (on rat)). When tested on mouse with hot-plate tests, this toxin significantly increases the base pain threshold and shows analgesic effects. This Conus lividus (Livid cone) protein is Alpha-conotoxin LvIA.